We begin with the raw amino-acid sequence, 269 residues long: MPELPEVEITKRGLVPLIINQEVSRVILHRENLRWAIPKNLITILANQKIKTIKRRAKYLLIKFEAGTLIIHLGMSGSIKVVDIKTPLLKHEHFELQFNNGTSMRLNDPRRFGAVLFSKDGSHKLLDSLGVEPLEAVFNNGYLYQKSRNKRKNIKDFIMDSKIVVGVGNIYACESLFMASINPQRKAGNVSKTRYKILTQCIKDILTQAIKAGGTTLQDFSQVDGNPGYFTQTLSVYGCENKTCHFCKSKIIKIVQNQRSTFYCRKCQT.

P2 acts as the Schiff-base intermediate with DNA in catalysis. Residue E3 is the Proton donor of the active site. K58 functions as the Proton donor; for beta-elimination activity in the catalytic mechanism. The DNA site is built by H91, R110, and K150. Residues 235 to 269 form an FPG-type zinc finger; it reads SVYGCENKTCHFCKSKIIKIVQNQRSTFYCRKCQT. The Proton donor; for delta-elimination activity role is filled by R259.

It belongs to the FPG family. As to quaternary structure, monomer. The cofactor is Zn(2+).

It carries out the reaction Hydrolysis of DNA containing ring-opened 7-methylguanine residues, releasing 2,6-diamino-4-hydroxy-5-(N-methyl)formamidopyrimidine.. The catalysed reaction is 2'-deoxyribonucleotide-(2'-deoxyribose 5'-phosphate)-2'-deoxyribonucleotide-DNA = a 3'-end 2'-deoxyribonucleotide-(2,3-dehydro-2,3-deoxyribose 5'-phosphate)-DNA + a 5'-end 5'-phospho-2'-deoxyribonucleoside-DNA + H(+). Involved in base excision repair of DNA damaged by oxidation or by mutagenic agents. Acts as a DNA glycosylase that recognizes and removes damaged bases. Has a preference for oxidized purines, such as 7,8-dihydro-8-oxoguanine (8-oxoG). Has AP (apurinic/apyrimidinic) lyase activity and introduces nicks in the DNA strand. Cleaves the DNA backbone by beta-delta elimination to generate a single-strand break at the site of the removed base with both 3'- and 5'-phosphates. This Ruthia magnifica subsp. Calyptogena magnifica protein is Formamidopyrimidine-DNA glycosylase.